Consider the following 213-residue polypeptide: Thymidylate kinase (213 aa).

9–16 (GVEGCGKT) provides a ligand contact to ATP.

The protein belongs to the thymidylate kinase family.

The catalysed reaction is dTMP + ATP = dTDP + ADP. Its function is as follows. Phosphorylation of dTMP to form dTDP in both de novo and salvage pathways of dTTP synthesis. This is Thymidylate kinase from Geotalea uraniireducens (strain Rf4) (Geobacter uraniireducens).